The sequence spans 142 residues: MAPSAKATAAKKAVVKGTNGKKALKVRTSATFRLPKTLKLARAPKYASKAVPHYNRLDSYKVIEQPITSETAMKKVEDGNILVFQVSMKANKYQIKKAVKELYEVDVLKVNTLVRPNGTKKAYVRLTADYDALDIANRIGYI.

Residue lysine 61 forms a Glycyl lysine isopeptide (Lys-Gly) (interchain with G-Cter in SUMO) linkage.

This sequence belongs to the universal ribosomal protein uL23 family. Component of the large ribosomal subunit (LSU). Mature yeast ribosomes consist of a small (40S) and a large (60S) subunit. The 40S small subunit contains 1 molecule of ribosomal RNA (18S rRNA) and 33 different proteins (encoded by 57 genes). The large 60S subunit contains 3 rRNA molecules (25S, 5.8S and 5S rRNA) and 46 different proteins (encoded by 81 genes). uL23 is associated with the polypeptide exit tunnel.

The protein resides in the cytoplasm. Component of the ribosome, a large ribonucleoprotein complex responsible for the synthesis of proteins in the cell. The small ribosomal subunit (SSU) binds messenger RNAs (mRNAs) and translates the encoded message by selecting cognate aminoacyl-transfer RNA (tRNA) molecules. The large subunit (LSU) contains the ribosomal catalytic site termed the peptidyl transferase center (PTC), which catalyzes the formation of peptide bonds, thereby polymerizing the amino acids delivered by tRNAs into a polypeptide chain. The nascent polypeptides leave the ribosome through a tunnel in the LSU and interact with protein factors that function in enzymatic processing, targeting, and the membrane insertion of nascent chains at the exit of the ribosomal tunnel. uL23 is a major component of the universal docking site for these factors at the polypeptide exit tunnel. The sequence is that of Large ribosomal subunit protein uL23 from Saccharomyces cerevisiae (strain ATCC 204508 / S288c) (Baker's yeast).